A 75-amino-acid polypeptide reads, in one-letter code: Metallothionein-like protein 1 (75 aa).

It belongs to the metallothionein superfamily. Type 15 family.

Its function is as follows. Metallothioneins have a high content of cysteine residues that bind various heavy metals. In Pisum sativum (Garden pea), this protein is Metallothionein-like protein 1 (MTA).